Reading from the N-terminus, the 164-residue chain is 3-isopropylmalate dehydratase small subunit 1 (164 aa).

It belongs to the LeuD family. LeuD type 2 subfamily. Heterodimer of LeuC and LeuD.

It carries out the reaction (2R,3S)-3-isopropylmalate = (2S)-2-isopropylmalate. It participates in amino-acid biosynthesis; L-leucine biosynthesis; L-leucine from 3-methyl-2-oxobutanoate: step 2/4. In terms of biological role, catalyzes the isomerization between 2-isopropylmalate and 3-isopropylmalate, via the formation of 2-isopropylmaleate. This is 3-isopropylmalate dehydratase small subunit 1 (leuD1) from Pyrococcus abyssi (strain GE5 / Orsay).